Reading from the N-terminus, the 210-residue chain is Ribosomal RNA small subunit methyltransferase G (210 aa).

Residues G80, L85, V131–E132, and R146 each bind S-adenosyl-L-methionine.

It belongs to the methyltransferase superfamily. RNA methyltransferase RsmG family.

The protein resides in the cytoplasm. It carries out the reaction guanosine(527) in 16S rRNA + S-adenosyl-L-methionine = N(7)-methylguanosine(527) in 16S rRNA + S-adenosyl-L-homocysteine. Functionally, specifically methylates the N7 position of guanine in position 527 of 16S rRNA. The protein is Ribosomal RNA small subunit methyltransferase G of Pasteurella multocida (strain Pm70).